A 313-amino-acid chain; its full sequence is Ribosomal RNA small subunit methyltransferase H (313 aa).

S-adenosyl-L-methionine contacts are provided by residues 35 to 37 (GGH), aspartate 55, phenylalanine 79, aspartate 100, and glutamine 107.

It belongs to the methyltransferase superfamily. RsmH family.

It is found in the cytoplasm. The catalysed reaction is cytidine(1402) in 16S rRNA + S-adenosyl-L-methionine = N(4)-methylcytidine(1402) in 16S rRNA + S-adenosyl-L-homocysteine + H(+). Functionally, specifically methylates the N4 position of cytidine in position 1402 (C1402) of 16S rRNA. The polypeptide is Ribosomal RNA small subunit methyltransferase H (Burkholderia mallei (strain NCTC 10247)).